The primary structure comprises 392 residues: GTPase Obg (392 aa).

The 159-residue stretch at 1 to 159 folds into the Obg domain; sequence MKFVDEATIL…RDLQLELMLL (159 aa). The interval 127-146 is disordered; it reads NTRFKSSVNRTPRQKTMGTP. Residues 129-143 show a composition bias toward polar residues; that stretch reads RFKSSVNRTPRQKTM. In terms of domain architecture, OBG-type G spans 160-333; that stretch reads ADVGMLGLPN…LCWDVMAFIK (174 aa). GTP is bound by residues 166–173, 191–195, 213–216, 283–286, and 314–316; these read GLPNAGKS, FTTLV, DIPG, NKVD, and SAA. 2 residues coordinate Mg(2+): S173 and T193. The segment at 360 to 392 is disordered; that stretch reads QLEEAQPEVEEDDDWDDDWDEDDEEGVETIYQR. Acidic residues predominate over residues 364 to 386; that stretch reads AQPEVEEDDDWDDDWDEDDEEGV.

Belongs to the TRAFAC class OBG-HflX-like GTPase superfamily. OBG GTPase family. As to quaternary structure, monomer. Requires Mg(2+) as cofactor.

It is found in the cytoplasm. Functionally, an essential GTPase which binds GTP, GDP and possibly (p)ppGpp with moderate affinity, with high nucleotide exchange rates and a fairly low GTP hydrolysis rate. Plays a role in control of the cell cycle, stress response, ribosome biogenesis and in those bacteria that undergo differentiation, in morphogenesis control. In Erwinia tasmaniensis (strain DSM 17950 / CFBP 7177 / CIP 109463 / NCPPB 4357 / Et1/99), this protein is GTPase Obg.